The sequence spans 265 residues: Phosphatidylglycerol--prolipoprotein diacylglyceryl transferase (265 aa).

4 helical membrane-spanning segments follow: residues 17-37 (LSIR…WLLG), 56-76 (LVTY…MLFY), 92-112 (WQGG…VWFF), and 117-137 (GKGF…GLFA). Arg139 is a binding site for a 1,2-diacyl-sn-glycero-3-phospho-(1'-sn-glycerol). 3 helical membrane-spanning segments follow: residues 173–193 (PSQL…VWLY), 201–221 (GAVS…VELV), and 235–255 (WLTM…WLLA).

This sequence belongs to the Lgt family.

It localises to the cell inner membrane. It catalyses the reaction L-cysteinyl-[prolipoprotein] + a 1,2-diacyl-sn-glycero-3-phospho-(1'-sn-glycerol) = an S-1,2-diacyl-sn-glyceryl-L-cysteinyl-[prolipoprotein] + sn-glycerol 1-phosphate + H(+). The protein operates within protein modification; lipoprotein biosynthesis (diacylglyceryl transfer). Functionally, catalyzes the transfer of the diacylglyceryl group from phosphatidylglycerol to the sulfhydryl group of the N-terminal cysteine of a prolipoprotein, the first step in the formation of mature lipoproteins. In Solidesulfovibrio magneticus (strain ATCC 700980 / DSM 13731 / RS-1) (Desulfovibrio magneticus), this protein is Phosphatidylglycerol--prolipoprotein diacylglyceryl transferase.